A 372-amino-acid chain; its full sequence is Glutamate 5-kinase (372 aa).

Residue Lys14 coordinates ATP. Substrate is bound by residues Ser54, Asp141, and Asn153. 173–174 (TD) provides a ligand contact to ATP. The PUA domain maps to 280–358 (RGTLVLDAGA…EAIESILGYS (79 aa)).

It belongs to the glutamate 5-kinase family.

It localises to the cytoplasm. It catalyses the reaction L-glutamate + ATP = L-glutamyl 5-phosphate + ADP. It participates in amino-acid biosynthesis; L-proline biosynthesis; L-glutamate 5-semialdehyde from L-glutamate: step 1/2. Functionally, catalyzes the transfer of a phosphate group to glutamate to form L-glutamate 5-phosphate. This is Glutamate 5-kinase from Pseudomonas putida (strain ATCC 700007 / DSM 6899 / JCM 31910 / BCRC 17059 / LMG 24140 / F1).